The following is a 100-amino-acid chain: Urease subunit gamma (100 aa).

The protein belongs to the urease gamma subunit family. In terms of assembly, heterotrimer of UreA (gamma), UreB (beta) and UreC (alpha) subunits. Three heterotrimers associate to form the active enzyme.

The protein resides in the cytoplasm. The enzyme catalyses urea + 2 H2O + H(+) = hydrogencarbonate + 2 NH4(+). Its pathway is nitrogen metabolism; urea degradation; CO(2) and NH(3) from urea (urease route): step 1/1. This chain is Urease subunit gamma, found in Corynebacterium efficiens (strain DSM 44549 / YS-314 / AJ 12310 / JCM 11189 / NBRC 100395).